We begin with the raw amino-acid sequence, 285 residues long: 4-diphosphocytidyl-2-C-methyl-D-erythritol kinase (285 aa).

Lysine 10 is an active-site residue. 93–103 (PIGGGLGGGSS) lines the ATP pocket. The active site involves aspartate 135.

It belongs to the GHMP kinase family. IspE subfamily.

The catalysed reaction is 4-CDP-2-C-methyl-D-erythritol + ATP = 4-CDP-2-C-methyl-D-erythritol 2-phosphate + ADP + H(+). It functions in the pathway isoprenoid biosynthesis; isopentenyl diphosphate biosynthesis via DXP pathway; isopentenyl diphosphate from 1-deoxy-D-xylulose 5-phosphate: step 3/6. Functionally, catalyzes the phosphorylation of the position 2 hydroxy group of 4-diphosphocytidyl-2C-methyl-D-erythritol. The protein is 4-diphosphocytidyl-2-C-methyl-D-erythritol kinase of Ruthia magnifica subsp. Calyptogena magnifica.